A 166-amino-acid polypeptide reads, in one-letter code: Transcriptional repressor NrdR (166 aa).

A zinc finger lies at Cys-3–Cys-34. Residues Leu-49–Val-139 form the ATP-cone domain.

Belongs to the NrdR family. Zn(2+) is required as a cofactor.

Negatively regulates transcription of bacterial ribonucleotide reductase nrd genes and operons by binding to NrdR-boxes. The protein is Transcriptional repressor NrdR of Levilactobacillus brevis (strain ATCC 367 / BCRC 12310 / CIP 105137 / JCM 1170 / LMG 11437 / NCIMB 947 / NCTC 947) (Lactobacillus brevis).